A 235-amino-acid polypeptide reads, in one-letter code: 2,3,4,5-tetrahydropyridine-2,6-dicarboxylate N-acetyltransferase (235 aa).

The protein belongs to the transferase hexapeptide repeat family. DapH subfamily.

It catalyses the reaction (S)-2,3,4,5-tetrahydrodipicolinate + acetyl-CoA + H2O = L-2-acetamido-6-oxoheptanedioate + CoA. Its pathway is amino-acid biosynthesis; L-lysine biosynthesis via DAP pathway; LL-2,6-diaminopimelate from (S)-tetrahydrodipicolinate (acetylase route): step 1/3. In terms of biological role, catalyzes the transfer of an acetyl group from acetyl-CoA to tetrahydrodipicolinate. The sequence is that of 2,3,4,5-tetrahydropyridine-2,6-dicarboxylate N-acetyltransferase from Exiguobacterium sp. (strain ATCC BAA-1283 / AT1b).